The sequence spans 171 residues: Crossover junction endodeoxyribonuclease RuvC (171 aa).

Residues Asp7, Glu66, and Asp138 contribute to the active site. Residues Asp7, Glu66, and Asp138 each coordinate Mg(2+).

This sequence belongs to the RuvC family. In terms of assembly, homodimer which binds Holliday junction (HJ) DNA. The HJ becomes 2-fold symmetrical on binding to RuvC with unstacked arms; it has a different conformation from HJ DNA in complex with RuvA. In the full resolvosome a probable DNA-RuvA(4)-RuvB(12)-RuvC(2) complex forms which resolves the HJ. Requires Mg(2+) as cofactor.

The protein localises to the cytoplasm. The catalysed reaction is Endonucleolytic cleavage at a junction such as a reciprocal single-stranded crossover between two homologous DNA duplexes (Holliday junction).. Functionally, the RuvA-RuvB-RuvC complex processes Holliday junction (HJ) DNA during genetic recombination and DNA repair. Endonuclease that resolves HJ intermediates. Cleaves cruciform DNA by making single-stranded nicks across the HJ at symmetrical positions within the homologous arms, yielding a 5'-phosphate and a 3'-hydroxyl group; requires a central core of homology in the junction. The consensus cleavage sequence is 5'-(A/T)TT(C/G)-3'. Cleavage occurs on the 3'-side of the TT dinucleotide at the point of strand exchange. HJ branch migration catalyzed by RuvA-RuvB allows RuvC to scan DNA until it finds its consensus sequence, where it cleaves and resolves the cruciform DNA. In Francisella tularensis subsp. holarctica (strain FTNF002-00 / FTA), this protein is Crossover junction endodeoxyribonuclease RuvC.